We begin with the raw amino-acid sequence, 302 residues long: MATEEHQRLASIVKSCHESLRQLTKEYGATAAWQEHTSPRNAKQLAEYAKAMKQLAAIWETNDGKVELQARSRIKWAIDYITKYFFTEGIYLQKRQREQRLLESYRAEGKLGEVQCRLMEEPPDRLHVLDVGSCFNPFSSAPHLEVTALDLCPATEDVLQADFLKVEVVPGIREPELEEGSVRRLPASHYECVIFSLLLEYMPSAEQRLQCCLQAYDLLLPEGILVLITPDSQHVGKNAHLMKNWRYSLARIGLLRVRFEKLPHISCMVFRKAISRELSQHWASIHREEGMCEEIRIPQDDS.

Residues R73, G132, and D150 each contribute to the S-adenosyl-L-homocysteine site. The S-adenosyl-L-methionine site is built by R73, G132, D150, L151, D162, F163, and S196. 3 residues coordinate S-adenosyl-L-homocysteine: D162, F163, and S196.

The protein belongs to the BMT2/SAMTOR family.

Its function is as follows. S-adenosyl-L-methionine-binding protein. It is unclear whether this protein acts as a sensor of S-adenosyl-L-methionine to signal methionine sufficiency to mTORC1. Probably acts as a S-adenosyl-L-methionine-dependent methyltransferase. The polypeptide is S-adenosylmethionine sensor upstream of mTORC1 (Drosophila melanogaster (Fruit fly)).